Consider the following 360-residue polypeptide: Phospho-N-acetylmuramoyl-pentapeptide-transferase (360 aa).

10 helical membrane passes run 20-40 (YITF…FFFG), 71-91 (TPTM…LLWA), 93-113 (LDNG…AIGF), 134-154 (LLIG…LHPA), 168-188 (ALIN…LGAA), 199-219 (GLAI…AYMV), 239-259 (LAVF…YNAP), 263-283 (VFMG…IAVV), 288-308 (IVLA…IIQV), and 337-357 (QIVI…LATL).

This sequence belongs to the glycosyltransferase 4 family. MraY subfamily. Mg(2+) is required as a cofactor.

Its subcellular location is the cell inner membrane. It carries out the reaction UDP-N-acetyl-alpha-D-muramoyl-L-alanyl-gamma-D-glutamyl-meso-2,6-diaminopimeloyl-D-alanyl-D-alanine + di-trans,octa-cis-undecaprenyl phosphate = di-trans,octa-cis-undecaprenyl diphospho-N-acetyl-alpha-D-muramoyl-L-alanyl-D-glutamyl-meso-2,6-diaminopimeloyl-D-alanyl-D-alanine + UMP. It participates in cell wall biogenesis; peptidoglycan biosynthesis. Its function is as follows. Catalyzes the initial step of the lipid cycle reactions in the biosynthesis of the cell wall peptidoglycan: transfers peptidoglycan precursor phospho-MurNAc-pentapeptide from UDP-MurNAc-pentapeptide onto the lipid carrier undecaprenyl phosphate, yielding undecaprenyl-pyrophosphoryl-MurNAc-pentapeptide, known as lipid I. The chain is Phospho-N-acetylmuramoyl-pentapeptide-transferase from Paracoccus denitrificans (strain Pd 1222).